Consider the following 258-residue polypeptide: Ribonuclease HII (258 aa).

The RNase H type-2 domain occupies 71–258 (ELIAGIDEVG…PIKSMVNFKY (188 aa)). A divalent metal cation is bound by residues aspartate 77, glutamate 78, and aspartate 169.

Belongs to the RNase HII family. Mn(2+) serves as cofactor. It depends on Mg(2+) as a cofactor.

The protein resides in the cytoplasm. It catalyses the reaction Endonucleolytic cleavage to 5'-phosphomonoester.. In terms of biological role, endonuclease that specifically degrades the RNA of RNA-DNA hybrids. The polypeptide is Ribonuclease HII (Lactococcus lactis subsp. cremoris (strain SK11)).